Consider the following 172-residue polypeptide: Peptidyl-prolyl cis-trans isomerase (172 aa).

Positions 7–170 constitute a PPIase cyclophilin-type domain; it reads FFDMTVGGAP…KVVKVADCGQ (164 aa).

It belongs to the cyclophilin-type PPIase family.

The protein resides in the cytoplasm. It catalyses the reaction [protein]-peptidylproline (omega=180) = [protein]-peptidylproline (omega=0). Its activity is regulated as follows. Binds cyclosporin A (CsA). CsA mediates some of its effects via an inhibitory action on PPIase. PPIases accelerate the folding of proteins. It catalyzes the cis-trans isomerization of proline imidic peptide bonds in oligopeptides. The polypeptide is Peptidyl-prolyl cis-trans isomerase (CYP) (Zea mays (Maize)).